The primary structure comprises 109 residues: Large ribosomal subunit protein uL22 (109 aa).

Belongs to the universal ribosomal protein uL22 family. Part of the 50S ribosomal subunit.

Its function is as follows. This protein binds specifically to 23S rRNA; its binding is stimulated by other ribosomal proteins, e.g. L4, L17, and L20. It is important during the early stages of 50S assembly. It makes multiple contacts with different domains of the 23S rRNA in the assembled 50S subunit and ribosome. Functionally, the globular domain of the protein is located near the polypeptide exit tunnel on the outside of the subunit, while an extended beta-hairpin is found that lines the wall of the exit tunnel in the center of the 70S ribosome. This is Large ribosomal subunit protein uL22 from Methylobacillus flagellatus (strain ATCC 51484 / DSM 6875 / VKM B-1610 / KT).